Consider the following 317-residue polypeptide: Universal stress protein MT2052 (317 aa).

ATP contacts are provided by residues G13, 128-134 (GYRGQGA), 142-143 (SV), G175, D208, 277-283 (GSHGRGG), and 291-293 (SVS).

The protein belongs to the universal stress protein A family.

In Mycobacterium tuberculosis (strain CDC 1551 / Oshkosh), this protein is Universal stress protein MT2052.